The sequence spans 813 residues: Ribosome-releasing factor 2, mitochondrial (813 aa).

Residues 1 to 20 constitute a mitochondrion transit peptide; that stretch reads MLRIVWKPLKIRLPVWRRYQ. The 289-residue stretch at 26-314 folds into the tr-type G domain; sequence NSIRNVGIIA…AIIDYLPSPV (289 aa). GTP contacts are provided by residues 35-42, 99-103, and 153-156; these read AHIDAGKT, DTPGH, and NKMD.

It belongs to the TRAFAC class translation factor GTPase superfamily. Classic translation factor GTPase family. EF-G/EF-2 subfamily.

The protein resides in the mitochondrion. Functionally, mitochondrial GTPase that mediates the disassembly of ribosomes from messenger RNA at the termination of mitochondrial protein biosynthesis. Not involved in the GTP-dependent ribosomal translocation step during translation elongation. The polypeptide is Ribosome-releasing factor 2, mitochondrial (mef2) (Schizosaccharomyces pombe (strain 972 / ATCC 24843) (Fission yeast)).